We begin with the raw amino-acid sequence, 205 residues long: Outer-membrane lipoprotein carrier protein (205 aa).

The signal sequence occupies residues 1–22 (MKKIVIVISILLTSFLSSAVSA).

It belongs to the LolA family. Monomer.

Its subcellular location is the periplasm. Functionally, participates in the translocation of lipoproteins from the inner membrane to the outer membrane. Only forms a complex with a lipoprotein if the residue after the N-terminal Cys is not an aspartate (The Asp acts as a targeting signal to indicate that the lipoprotein should stay in the inner membrane). The protein is Outer-membrane lipoprotein carrier protein of Psychromonas ingrahamii (strain DSM 17664 / CCUG 51855 / 37).